The chain runs to 396 residues: NADH-quinone oxidoreductase subunit D (396 aa).

This sequence belongs to the complex I 49 kDa subunit family. NDH-1 is composed of 14 different subunits. Subunits NuoB, C, D, E, F, and G constitute the peripheral sector of the complex.

Its subcellular location is the cell inner membrane. The catalysed reaction is a quinone + NADH + 5 H(+)(in) = a quinol + NAD(+) + 4 H(+)(out). Functionally, NDH-1 shuttles electrons from NADH, via FMN and iron-sulfur (Fe-S) centers, to quinones in the respiratory chain. The immediate electron acceptor for the enzyme in this species is believed to be ubiquinone. Couples the redox reaction to proton translocation (for every two electrons transferred, four hydrogen ions are translocated across the cytoplasmic membrane), and thus conserves the redox energy in a proton gradient. The protein is NADH-quinone oxidoreductase subunit D of Rhodopseudomonas palustris (strain BisB18).